Reading from the N-terminus, the 129-residue chain is MIYPLFRICILGAFLLGSYACLENSTQKGIEGVTLSHNSVQINNTLAKSAPFCESDALSMNYSTENMLSNNACDYTKNSSYPYIITIITKAFDNALENSLNLQANRKLYHRVGTCIQNIFYQLLLTVNY.

The N-terminal stretch at 1-20 (MIYPLFRICILGAFLLGSYA) is a signal peptide.

This is an uncharacterized protein from Saccharomyces cerevisiae (strain ATCC 204508 / S288c) (Baker's yeast).